Reading from the N-terminus, the 308-residue chain is D-alanine--D-alanine ligase (308 aa).

Residues 102 to 302 (KTVAKSAGIP…FGALLSWMVE (201 aa)) form the ATP-grasp domain. Residue 128–183 (PMEPPYVVKPVAEGSSFGVVIVREGQSHPPQVLGSAEWGYGERVMVERYIPGRELT) participates in ATP binding. Mg(2+) is bound by residues aspartate 252, glutamate 269, and asparagine 271.

Belongs to the D-alanine--D-alanine ligase family. Requires Mg(2+) as cofactor. Mn(2+) is required as a cofactor.

The protein resides in the cytoplasm. The catalysed reaction is 2 D-alanine + ATP = D-alanyl-D-alanine + ADP + phosphate + H(+). The protein operates within cell wall biogenesis; peptidoglycan biosynthesis. Cell wall formation. The sequence is that of D-alanine--D-alanine ligase from Chelativorans sp. (strain BNC1).